The sequence spans 226 residues: CRISPR-associated endonuclease Cas3-HD (226 aa).

One can recognise an HD Cas3-type domain in the interval 9 to 204 (GRDCLQTYED…HVLTVCDNWG (196 aa)). 4 residues coordinate Mg(2+): Asp-56, His-74, His-101, and His-102.

It belongs to the CRISPR-associated nuclease Cas3-HD family. In terms of assembly, monomer. Can form a Cascade complex with Csa5, Cas7, Cas5a, Cas3 and Cas8a2. It depends on Mg(2+) as a cofactor.

In terms of biological role, CRISPR (clustered regularly interspaced short palindromic repeat), is an adaptive immune system that provides protection against mobile genetic elements (viruses, transposable elements and conjugative plasmids). CRISPR clusters contain sequences complementary to antecedent mobile elements and target invading nucleic acids. CRISPR clusters are transcribed and processed into CRISPR RNA (crRNA). Cas3 plus Cascade participate in CRISPR interference, the third stage of CRISPR immunity. Acts as a ssDNA and ssRNA nuclease, probably with both exo- and endonuclease activities. Activity is higher for DNA than RNA. This chain is CRISPR-associated endonuclease Cas3-HD (cas3'), found in Thermoproteus tenax (strain ATCC 35583 / DSM 2078 / JCM 9277 / NBRC 100435 / Kra 1).